Here is a 69-residue protein sequence, read N- to C-terminus: Cytochrome c oxidase subunit 8A, mitochondrial (69 aa).

Residues 1–25 (MSVLTPLLLRGLTGSARRLPVPCAR) constitute a mitochondrion transit peptide. The SIFI-degron motif lies at 2-19 (SVLTPLLLRGLTGSARRL). Residues 26-36 (VHSKPPREQLG) are Mitochondrial matrix-facing. A helical membrane pass occupies residues 37–60 (TMDIAIGLTSCFVCFLLPSGWVLS). At 61 to 69 (HLENYKKRE) the chain is on the mitochondrial intermembrane side.

This sequence belongs to the cytochrome c oxidase VIII family. Component of the cytochrome c oxidase (complex IV, CIV), a multisubunit enzyme composed of 14 subunits. The complex is composed of a catalytic core of 3 subunits MT-CO1, MT-CO2 and MT-CO3, encoded in the mitochondrial DNA, and 11 supernumerary subunits COX4I, COX5A, COX5B, COX6A, COX6B, COX6C, COX7A, COX7B, COX7C, COX8 and NDUFA4, which are encoded in the nuclear genome. The complex exists as a monomer or a dimer and forms supercomplexes (SCs) in the inner mitochondrial membrane with NADH-ubiquinone oxidoreductase (complex I, CI) and ubiquinol-cytochrome c oxidoreductase (cytochrome b-c1 complex, complex III, CIII), resulting in different assemblies (supercomplex SCI(1)III(2)IV(1) and megacomplex MCI(2)III(2)IV(2)). Post-translationally, in response to mitochondrial stress, the precursor protein is ubiquitinated by the SIFI complex in the cytoplasm before mitochondrial import, leading to its degradation. Within the SIFI complex, UBR4 initiates ubiquitin chain that are further elongated or branched by KCMF1.

The protein resides in the mitochondrion inner membrane. The protein operates within energy metabolism; oxidative phosphorylation. Component of the cytochrome c oxidase, the last enzyme in the mitochondrial electron transport chain which drives oxidative phosphorylation. The respiratory chain contains 3 multisubunit complexes succinate dehydrogenase (complex II, CII), ubiquinol-cytochrome c oxidoreductase (cytochrome b-c1 complex, complex III, CIII) and cytochrome c oxidase (complex IV, CIV), that cooperate to transfer electrons derived from NADH and succinate to molecular oxygen, creating an electrochemical gradient over the inner membrane that drives transmembrane transport and the ATP synthase. Cytochrome c oxidase is the component of the respiratory chain that catalyzes the reduction of oxygen to water. Electrons originating from reduced cytochrome c in the intermembrane space (IMS) are transferred via the dinuclear copper A center (CU(A)) of subunit 2 and heme A of subunit 1 to the active site in subunit 1, a binuclear center (BNC) formed by heme A3 and copper B (CU(B)). The BNC reduces molecular oxygen to 2 water molecules using 4 electrons from cytochrome c in the IMS and 4 protons from the mitochondrial matrix. The sequence is that of Cytochrome c oxidase subunit 8A, mitochondrial (COX8A) from Otolemur crassicaudatus (Brown greater galago).